A 3131-amino-acid chain; its full sequence is Enniatin synthase (3131 aa).

Residues 53 to 466 (ADDKQRAVGH…VEKVDMMTQE (414 aa)) are condensation 1. Positions 186-212 (NDEHPRQFETPDSSQATPEEDLQPNPS) are disordered. Positions 495–887 (SQSPNKAAVA…GRMDSQVKIR (393 aa)) are adenylation 1. The Carrier 1 domain occupies 1010 to 1086 (SSGTDTYTKL…GLKAIVIGTS (77 aa)). At S1047 the chain carries O-(pantetheine 4'-phosphoryl)serine. Residues 1105 to 1534 (SYAQNRMWFL…ETCISVLPLT (430 aa)) are condensation 2. The interval 1563–1960 (FREQAAANPE…GRMDNQFKIR (398 aa)) is adenylation 2. An S-adenosyl-L-methionine-dependent N-methyltransferase region spans residues 2021–2177 (EGWQDHFESG…YLAEVIDGLI (157 aa)). 2 consecutive Carrier domains span residues 2504-2578 (FPIS…RQGL) and 2598-2671 (APRT…ESSH). An O-(pantetheine 4'-phosphoryl)serine mark is found at S2538 and S2632. The interval 2718–3123 (QDVYPSTQMQ…RHVLEEVCKT (406 aa)) is condensation 3.

This sequence belongs to the ATP-dependent AMP-binding enzyme family. Requires pantetheine 4'-phosphate as cofactor. Post-translationally, the N-terminus is blocked.

It participates in antibiotic biosynthesis; enniatin biosynthesis. With respect to regulation, the N-methylation activity is inhibited by S-adenosyl-L-homocysteine and sinefugin. Functionally, nonribosomal peptide synthetase that synthesizes enniatin by coupling three D-hydroxycarboxylic acids and three L-amino acids via amide and ester bonds in an alternating fashion. Whereas ESYN1 can accept different amino acids as precursors (L -valine, L-isoleucine or L-leucine), only one species of D-hydroxycarboxylic acid can be found in natural enniatin isolates (D-hydroxyisovaleric acid, D-Hiv). D-Hiv stems from L-valine deanimation by a valine aminotransferase to 2-keto-isovaleric acid (2-Kiv), which becomes subsequently reduced by a keto-isovaleric acid reductase (KivR) to D-Hiv. Peptide bond formation and N-methylation of the amino acid occur before three enzyme-bound dipeptidols are condensed to a hexapeptidol. This Fusarium equiseti (Fusarium scirpi) protein is Enniatin synthase.